The chain runs to 185 residues: Ribosome-recycling factor (185 aa).

This sequence belongs to the RRF family.

It is found in the cytoplasm. Responsible for the release of ribosomes from messenger RNA at the termination of protein biosynthesis. May increase the efficiency of translation by recycling ribosomes from one round of translation to another. The polypeptide is Ribosome-recycling factor (Streptomyces avermitilis (strain ATCC 31267 / DSM 46492 / JCM 5070 / NBRC 14893 / NCIMB 12804 / NRRL 8165 / MA-4680)).